Reading from the N-terminus, the 518-residue chain is MAFWAGGSPSVVDYFPSEDFYRCGYCKNESGSRSNGMWAHSMTVQDYQDLIDRGWRRSGKYVYKPVMNQTCCPQYTIRCRPLQFQPSKSHKKVLKKMLKFLAKGEVPKGSCEDEPMDSTMDDAVAGDFALINKLDIQCDLKTLSDDIKESLESEGKNSKKEEPQELLQSQDFVGEKLGSGEPSHSVKVHTVPKPGKGADLSKPPCRKAKEIRKERKRLKLMQQNPAGELEGFQAQGHPPSLFPPKAKSNQPKSLEDLIFESLPENASHKLEVRVVRSSPPSSQFKATLLESYQVYKRYQMVIHKNPPDTPTESQFTRFLCSSPLEAETPPNGPDCGYGSFHQQYWLDGKIIAVGVIDILPNCVSSVYLYYDPDYSFLSLGVYSALREIAFTRQLHEKTSQLSYYYMGFYIHSCPKMKYKGQYRPSDLLCPETYVWVPIEQCLPSLENSKYCRFNQDPEAVDEDRSTEPDRLQVFHKRAIMPYGVYKKQQKDPSEEAAVLQYASLVGQKCSERMLLFRN.

At Ser169 the chain carries Phosphoserine. The tract at residues 175–203 is disordered; that stretch reads EKLGSGEPSHSVKVHTVPKPGKGADLSKP.

Belongs to the R-transferase family. In terms of assembly, monomer. Interacts with LIAT1; LIAT1 is not a substrate of ATE1, the interaction takes place in the cytoplasm and seems to increase ATE1 arginyltransferase activity.

It localises to the nucleus. The protein resides in the cytoplasm. The catalysed reaction is an N-terminal L-alpha-aminoacyl-[protein] + L-arginyl-tRNA(Arg) = an N-terminal L-arginyl-L-aminoacyl-[protein] + tRNA(Arg) + H(+). Involved in the post-translational conjugation of arginine to the N-terminal aspartate or glutamate of a protein. This arginylation is required for degradation of the protein via the ubiquitin pathway. Does not arginylate cysteine residues. In Homo sapiens (Human), this protein is Arginyl-tRNA--protein transferase 1.